The primary structure comprises 79 residues: Putative defensin-like protein 203 (79 aa).

Positions 1–27 (MAKLIVNFSALLMIILLVSNGLPKAVA) are cleaved as a signal peptide. Cystine bridges form between Cys30–Cys79, Cys40–Cys64, Cys49–Cys73, and Cys53–Cys75.

It belongs to the DEFL family.

It localises to the secreted. The sequence is that of Putative defensin-like protein 203 from Arabidopsis thaliana (Mouse-ear cress).